We begin with the raw amino-acid sequence, 419 residues long: L-rhamnose isomerase (419 aa).

Mn(2+) is bound by residues His262, Asp294, and Asp296.

The protein belongs to the rhamnose isomerase family. Homotetramer. Requires Mn(2+) as cofactor.

The protein localises to the cytoplasm. It carries out the reaction L-rhamnopyranose = L-rhamnulose. The protein operates within carbohydrate degradation; L-rhamnose degradation; glycerone phosphate from L-rhamnose: step 1/3. In terms of biological role, catalyzes the interconversion of L-rhamnose and L-rhamnulose. This Escherichia coli O139:H28 (strain E24377A / ETEC) protein is L-rhamnose isomerase.